An 80-amino-acid chain; its full sequence is Saposin-B-Val (80 aa).

The region spanning 1-80 (GDVCQDCIQM…CGLVGFCEEV (80 aa)) is the Saposin B-type domain. Cystine bridges form between C4/C77, C7/C71, and C36/C47. The N-linked (GlcNAc...) (complex) asparagine glycan is linked to N21.

As to quaternary structure, saposin-B is a homodimer. Interacts with GRN; facilitates lysosomal delivery of progranulin from the extracellular space and the biosynthetic pathway. Post-translationally, the one residue extended Saposin-B-Val is only found in a minority of the chains.

Functionally, saposin-B stimulates the hydrolysis of galacto-cerebroside sulfate by arylsulfatase A (EC 3.1.6.8), GM1 gangliosides by beta-galactosidase (EC 3.2.1.23) and globotriaosylceramide by alpha-galactosidase A (EC 3.2.1.22). Saposin-B forms a solubilizing complex with the substrates of the sphingolipid hydrolases. In Sus scrofa (Pig), this protein is Saposin-B-Val (PSAP).